A 203-amino-acid polypeptide reads, in one-letter code: dTTP/UTP pyrophosphatase (203 aa).

Residue D70 is the Proton acceptor of the active site.

This sequence belongs to the Maf family. YhdE subfamily. The cofactor is a divalent metal cation.

Its subcellular location is the cytoplasm. The catalysed reaction is dTTP + H2O = dTMP + diphosphate + H(+). The enzyme catalyses UTP + H2O = UMP + diphosphate + H(+). Its function is as follows. Nucleoside triphosphate pyrophosphatase that hydrolyzes dTTP and UTP. May have a dual role in cell division arrest and in preventing the incorporation of modified nucleotides into cellular nucleic acids. The sequence is that of dTTP/UTP pyrophosphatase (maf-1) from Pseudomonas putida (strain ATCC 47054 / DSM 6125 / CFBP 8728 / NCIMB 11950 / KT2440).